The sequence spans 217 residues: Probable GTP-binding protein EngB (217 aa).

The region spanning 33 to 217 (GPTEIAFAGR…RAAIELAVTR (185 aa)) is the EngB-type G domain. Residues 41–48 (GRSNVGKS), 68–72 (GRTQE), 95–98 (DMPG), 162–165 (TKTD), and 196–198 (TSS) each bind GTP. 2 residues coordinate Mg(2+): serine 48 and threonine 70.

The protein belongs to the TRAFAC class TrmE-Era-EngA-EngB-Septin-like GTPase superfamily. EngB GTPase family. The cofactor is Mg(2+).

Necessary for normal cell division and for the maintenance of normal septation. This is Probable GTP-binding protein EngB from Rhizobium meliloti (strain 1021) (Ensifer meliloti).